A 444-amino-acid chain; its full sequence is Putative zinc metalloprotease PD_0327 (444 aa).

H22 is a binding site for Zn(2+). Residue E23 is part of the active site. Residue H26 coordinates Zn(2+). Residues 98 to 120 form a helical membrane-spanning segment; the sequence is IAIVAAGPLANLLLCMLLLWVLF. In terms of domain architecture, PDZ spans 192 to 278; the sequence is TLELSKLKQP…HPGMIEIRRG (87 aa). 2 consecutive transmembrane segments (helical) span residues 371 to 393 and 418 to 440; these read VGWF…LFPI and AMAA…AFYN.

It belongs to the peptidase M50B family. Requires Zn(2+) as cofactor.

The protein resides in the cell inner membrane. The sequence is that of Putative zinc metalloprotease PD_0327 from Xylella fastidiosa (strain Temecula1 / ATCC 700964).